The primary structure comprises 329 residues: 4-hydroxythreonine-4-phosphate dehydrogenase (329 aa).

Substrate is bound by residues His136 and Thr137. The a divalent metal cation site is built by His166, His211, and His266. Substrate contacts are provided by Lys274, Asn283, and Arg292.

The protein belongs to the PdxA family. Homodimer. Zn(2+) serves as cofactor. Mg(2+) is required as a cofactor. Requires Co(2+) as cofactor.

It is found in the cytoplasm. The enzyme catalyses 4-(phosphooxy)-L-threonine + NAD(+) = 3-amino-2-oxopropyl phosphate + CO2 + NADH. It functions in the pathway cofactor biosynthesis; pyridoxine 5'-phosphate biosynthesis; pyridoxine 5'-phosphate from D-erythrose 4-phosphate: step 4/5. Its function is as follows. Catalyzes the NAD(P)-dependent oxidation of 4-(phosphooxy)-L-threonine (HTP) into 2-amino-3-oxo-4-(phosphooxy)butyric acid which spontaneously decarboxylates to form 3-amino-2-oxopropyl phosphate (AHAP). This Salmonella arizonae (strain ATCC BAA-731 / CDC346-86 / RSK2980) protein is 4-hydroxythreonine-4-phosphate dehydrogenase.